A 20-amino-acid chain; its full sequence is Non-secretory ribonuclease (20 aa).

The Proton acceptor role is filled by His-16.

Belongs to the pancreatic ribonuclease family. In terms of assembly, interacts with and forms a tight 1:1 complex with RNH1. Dimerization of two such complexes may occur.

It localises to the lysosome. Its subcellular location is the cytoplasmic granule. It carries out the reaction an [RNA] containing cytidine + H2O = an [RNA]-3'-cytidine-3'-phosphate + a 5'-hydroxy-ribonucleotide-3'-[RNA].. The catalysed reaction is an [RNA] containing uridine + H2O = an [RNA]-3'-uridine-3'-phosphate + a 5'-hydroxy-ribonucleotide-3'-[RNA].. Its function is as follows. This is a non-secretory ribonuclease. It is a pyrimidine specific nuclease with a slight preference for U. Cytotoxin and helminthotoxin. Possesses a wide variety of biological activities. The polypeptide is Non-secretory ribonuclease (RNASE2) (Sus scrofa (Pig)).